A 358-amino-acid polypeptide reads, in one-letter code: F-box/kelch-repeat protein SKIP4 (358 aa).

An F-box domain is found at 20–67 (ALISGVPDDISKSCLARVPREYHMAMKCVSRRWRDFVCSDEMCDYRNE). Kelch repeat units follow at residues 78 to 122 (LCRD…VLGK), 123 to 171 (RLFV…TLDG), 173 to 219 (IIAI…VMDG), 220 to 269 (RIYI…VLDQ), 271 to 307 (FGAKLTMWCKDTRMWIHIGKLSQLVMKQPCRLVSIGN), and 308 to 355 (SIFV…SCKS).

Part of a SCF (SKP1-cullin-F-box) protein ligase complex. Interacts with SKP1A/ASK1.

The protein operates within protein modification; protein ubiquitination. This Arabidopsis thaliana (Mouse-ear cress) protein is F-box/kelch-repeat protein SKIP4 (SKIP4).